Here is a 229-residue protein sequence, read N- to C-terminus: DNA repair protein RecO (229 aa).

It belongs to the RecO family.

Involved in DNA repair and RecF pathway recombination. The chain is DNA repair protein RecO from Legionella pneumophila subsp. pneumophila (strain Philadelphia 1 / ATCC 33152 / DSM 7513).